We begin with the raw amino-acid sequence, 259 residues long: Small ribosomal subunit protein uS2 (259 aa).

The segment at 232-259 (KAMEAEETKAAEKAVETEAKEETPQEAK) is disordered.

This sequence belongs to the universal ribosomal protein uS2 family.

This chain is Small ribosomal subunit protein uS2, found in Maridesulfovibrio salexigens (strain ATCC 14822 / DSM 2638 / NCIMB 8403 / VKM B-1763) (Desulfovibrio salexigens).